We begin with the raw amino-acid sequence, 313 residues long: Formimidoylglutamase (313 aa).

6 residues coordinate Mn(2+): His-130, Asp-155, His-157, Asp-159, Asp-241, and Asp-243.

Belongs to the arginase family. Mn(2+) serves as cofactor.

The catalysed reaction is N-formimidoyl-L-glutamate + H2O = formamide + L-glutamate. The protein operates within amino-acid degradation; L-histidine degradation into L-glutamate; L-glutamate from N-formimidoyl-L-glutamate (hydrolase route): step 1/1. Its function is as follows. Catalyzes the conversion of N-formimidoyl-L-glutamate to L-glutamate and formamide. This chain is Formimidoylglutamase, found in Salmonella choleraesuis (strain SC-B67).